Reading from the N-terminus, the 408-residue chain is Aminoacylase-1B (408 aa).

H80 is a Zn(2+) binding site. D82 is an active-site residue. D113 contributes to the Zn(2+) binding site. The active-site Proton acceptor is the E147. Zn(2+) is bound by residues E148, E175, and H373. S408 carries the phosphoserine modification.

The protein belongs to the peptidase M20A family. As to quaternary structure, homodimer. Zn(2+) serves as cofactor. As to expression, expressed in kidney.

The protein resides in the cytoplasm. The enzyme catalyses an N-acyl-L-amino acid + H2O = an L-alpha-amino acid + a carboxylate. The catalysed reaction is an N-acetyl-L-cysteine-S-conjugate + H2O = an S-substituted L-cysteine + acetate. Involved in the hydrolysis of N-acylated or N-acetylated amino acids (except L-aspartate). This Rattus norvegicus (Rat) protein is Aminoacylase-1B (Acy1b).